The sequence spans 1476 residues: Copper-transporting ATPase 1 (1476 aa).

Over 1 to 642 the chain is Cytoplasmic; sequence MEPSMDVNSV…HKREIKQWRS (642 aa). HMA domains lie at 8–74 and 85–151; these read NSVT…FDAL and TDTL…LETG. 3 residues coordinate Cu(+): threonine 18, cysteine 19, and cysteine 22. At threonine 152 the chain carries Phosphothreonine. 2 consecutive HMA domains span residues 171 to 237 and 276 to 342; these read VVLK…FPAF and STAT…PGQY. Residues cysteine 182, cysteine 185, cysteine 287, and cysteine 290 each coordinate Cu(+). Threonine 326 carries the post-translational modification Phosphothreonine. 4 positions are modified to phosphoserine: serine 338, serine 352, serine 356, and serine 361. HMA domains lie at 376-442, 478-544, and 554-620; these read QETV…FDAV, SKCY…FGAT, and GILK…FEAS. Positions 387, 390, 489, 492, 565, and 568 each coordinate Cu(+). A helical transmembrane segment spans residues 643-665; it reads SFLVSLFFCTPVMGLMMYMMAME. N-linked (GlcNAc...) asparagine glycans are attached at residues asparagine 674 and asparagine 685. Helical transmembrane passes span 695–717, 736–760, and 770–788; these read ILPG…QFFG, MDVL…VAMY, and SFDT…RWLE. A glycan (N-linked (GlcNAc...) asparagine) is linked at asparagine 887. A helical transmembrane segment spans residues 930-952; it reads YFVPFIVLVSIATLLVWIIIGFQ. A glycan (N-linked (GlcNAc...) asparagine) is linked at asparagine 953. The helical transmembrane segment at 978-998 threads the bilayer; that stretch reads AFQASITVLCIACPCSLGLAT. Aspartate 1034 acts as the 4-aspartylphosphate intermediate in catalysis. N-linked (GlcNAc...) asparagine glycosylation is found at asparagine 1130 and asparagine 1134. Transmembrane regions (helical) follow at residues 1347-1373 and 1379-1397; these read INFL…IGLV and GSAA…SLFL. A phosphoserine mark is found at serine 1420 and serine 1422. N-linked (GlcNAc...) asparagine glycosylation occurs at asparagine 1448. 7 positions are modified to phosphoserine: serine 1450, serine 1453, serine 1456, serine 1459, serine 1463, serine 1466, and serine 1476.

It belongs to the cation transport ATPase (P-type) (TC 3.A.3) family. As to quaternary structure, monomer. Interacts with PDZD11. Interacts with ATOX1 and COMMD1. Interacts with TYRP1. Directly interacts with SOD3; this interaction is copper-dependent and is required for SOD3 activity. Expressed in most tissues except liver.

The protein resides in the golgi apparatus. It localises to the trans-Golgi network membrane. Its subcellular location is the cell membrane. The catalysed reaction is Cu(+)(in) + ATP + H2O = Cu(+)(out) + ADP + phosphate + H(+). Its function is as follows. May function in the export of copper from the cytoplasm to an intracellular organelle. It may serve as well for the export of other metals. This chain is Copper-transporting ATPase 1 (ATP7A), found in Cricetulus griseus (Chinese hamster).